The primary structure comprises 159 residues: Cyclic pyranopterin monophosphate synthase (159 aa).

Substrate is bound by residues 75-77 and 113-114; these read LCH and ME. Aspartate 128 is an active-site residue.

Belongs to the MoaC family. Homohexamer; trimer of dimers.

It carries out the reaction (8S)-3',8-cyclo-7,8-dihydroguanosine 5'-triphosphate = cyclic pyranopterin phosphate + diphosphate. It participates in cofactor biosynthesis; molybdopterin biosynthesis. Catalyzes the conversion of (8S)-3',8-cyclo-7,8-dihydroguanosine 5'-triphosphate to cyclic pyranopterin monophosphate (cPMP). The sequence is that of Cyclic pyranopterin monophosphate synthase from Vibrio vulnificus (strain YJ016).